We begin with the raw amino-acid sequence, 216 residues long: MRIGILGGTFDPIHYGHIRPAIEVKHALALDKILLMPNHIPPHKHQPNLTTAQRLKMVADVCSQLDGFELCDIEAKRDTPSYTVVTLEQLKSLHPEHELFFIMGMDSFLQLKSWYEWQRLFDFAHLVVCQRPGWQLDAAHPMQQILTARSHAHQETHEGHAKNTHKNSGQIFPVTITPQDISSTQIREQLAKGEIPADLLMPITLDYIQNQRLYLP.

This sequence belongs to the NadD family.

It catalyses the reaction nicotinate beta-D-ribonucleotide + ATP + H(+) = deamido-NAD(+) + diphosphate. The protein operates within cofactor biosynthesis; NAD(+) biosynthesis; deamido-NAD(+) from nicotinate D-ribonucleotide: step 1/1. In terms of biological role, catalyzes the reversible adenylation of nicotinate mononucleotide (NaMN) to nicotinic acid adenine dinucleotide (NaAD). In Shewanella baltica (strain OS185), this protein is Probable nicotinate-nucleotide adenylyltransferase.